Here is a 470-residue protein sequence, read N- to C-terminus: Siroheme synthase (470 aa).

The tract at residues 1-213 (MSDATDPGWF…GEHAAARQVL (213 aa)) is precorrin-2 dehydrogenase /sirohydrochlorin ferrochelatase. NAD(+) is bound by residues 28-29 (GI) and 49-50 (PR). The tract at residues 224-470 (GEVWLVGAGP…VVTPPPLSGT (247 aa)) is uroporphyrinogen-III C-methyltransferase. S-adenosyl-L-methionine is bound at residue proline 233. Aspartate 256 (proton acceptor) is an active-site residue. Residue lysine 278 is the Proton donor of the active site. S-adenosyl-L-methionine-binding positions include 309–311 (GGD), isoleucine 314, 339–340 (TA), methionine 392, and glycine 421.

The protein in the N-terminal section; belongs to the precorrin-2 dehydrogenase / sirohydrochlorin ferrochelatase family. In the C-terminal section; belongs to the precorrin methyltransferase family.

The enzyme catalyses uroporphyrinogen III + 2 S-adenosyl-L-methionine = precorrin-2 + 2 S-adenosyl-L-homocysteine + H(+). It catalyses the reaction precorrin-2 + NAD(+) = sirohydrochlorin + NADH + 2 H(+). It carries out the reaction siroheme + 2 H(+) = sirohydrochlorin + Fe(2+). Its pathway is cofactor biosynthesis; adenosylcobalamin biosynthesis; precorrin-2 from uroporphyrinogen III: step 1/1. It functions in the pathway cofactor biosynthesis; adenosylcobalamin biosynthesis; sirohydrochlorin from precorrin-2: step 1/1. It participates in porphyrin-containing compound metabolism; siroheme biosynthesis; precorrin-2 from uroporphyrinogen III: step 1/1. The protein operates within porphyrin-containing compound metabolism; siroheme biosynthesis; siroheme from sirohydrochlorin: step 1/1. Its pathway is porphyrin-containing compound metabolism; siroheme biosynthesis; sirohydrochlorin from precorrin-2: step 1/1. Multifunctional enzyme that catalyzes the SAM-dependent methylations of uroporphyrinogen III at position C-2 and C-7 to form precorrin-2 via precorrin-1. Then it catalyzes the NAD-dependent ring dehydrogenation of precorrin-2 to yield sirohydrochlorin. Finally, it catalyzes the ferrochelation of sirohydrochlorin to yield siroheme. The sequence is that of Siroheme synthase from Gluconacetobacter diazotrophicus (strain ATCC 49037 / DSM 5601 / CCUG 37298 / CIP 103539 / LMG 7603 / PAl5).